A 106-amino-acid polypeptide reads, in one-letter code: MDNPNIAIEVVYALADRQKLLRLSVPVGTTVREAALRSGMQQFFPELDLHHAPLGIFGKAVAKPEERVLEEGERVEIYRPLIADPKEVRKQRAAKAKTREEGEEPA.

It belongs to the UPF0125 (RnfH) family.

The chain is Protein RnfH from Ectopseudomonas mendocina (strain ymp) (Pseudomonas mendocina).